Consider the following 146-residue polypeptide: Angiogenin (146 aa).

A signal peptide spans 1–24 (MAMSLCPLLLVFVLGLGLTPPSLA). Gln25 bears the Pyrrolidone carboxylic acid mark. His37 (proton acceptor) is an active-site residue. Residue Arg45 participates in tRNA binding. 3 cysteine pairs are disulfide-bonded: Cys50–Cys105, Cys63–Cys116, and Cys81–Cys131. Residues 55–59 (VRRHL) carry the Nucleolar localization signal motif. TRNA contacts are provided by Cys105 and Ile127. Catalysis depends on His138, which acts as the Proton donor.

Belongs to the pancreatic ribonuclease family. In terms of assembly, homodimer. Interacts with RNH1; inhibiting ANG ribonuclease activity. Interacts with PCNA.

The protein localises to the secreted. The protein resides in the nucleus. Its subcellular location is the nucleolus. It localises to the cytoplasm. It is found in the stress granule. With respect to regulation, has weak tRNA ribonuclease activity by itself due to partial autoinhibition by its C-terminus, which folds into a short alpha-helix that partially occludes the substrate-binding site. In absence of stress, the ribonuclease activity is inhibited by RNH1 in the cytoplasm. In response to stress, dissociates from RNH1 in the cytoplasm and associates with cytoplasmic ribosomes with vacant A-sites: ribosomes directly activate the tRNA ribonuclease activity of ANG by refolding the C-terminal alpha-helix. In response to stress, the angiogenic activity of ANG is inhibited by RNH1 in the nucleus. Secreted ribonuclease that can either promote or restrict cell proliferation of target cells, depending on the context. Endocytosed in target cells via its receptor PLXNB2 and translocates to the cytoplasm or nucleus. Under stress conditions, localizes to the cytoplasm and promotes the assembly of stress granules (SGs): specifically cleaves a subset of tRNAs within anticodon loops to produce tRNA-derived stress-induced fragments (tiRNAs), resulting in translation repression and inhibition of cell proliferation. tiRNas also prevent formation of apoptosome, thereby promoting cell survival. Preferentially cleaves RNAs between a pyrimidine and an adenosine residue, suggesting that it cleaves the anticodon loop of tRNA(Ala) (32-UUAGCAU-38) after positions 33 and 36. Cleaves a subset of tRNAs, including tRNA(Ala), tRNA(Glu), tRNA(Gly), tRNA(Lys), tRNA(Val), tRNA(His), tRNA(Asp) and tRNA(Sec). Under growth conditions and in differentiated cells, translocates to the nucleus and stimulates ribosomal RNA (rRNA) transcription, including that containing the initiation site sequences of 45S rRNA, thereby promoting cell growth and proliferation. Angiogenin induces vascularization of normal and malignant tissues via its ability to promote rRNA transcription. Involved in hematopoietic stem and progenitor cell (HSPC) growth and survival by promoting rRNA transcription in growth conditions and inhibiting translation in response to stress, respectively. Mediates the crosstalk between myeloid and intestinal epithelial cells to protect the intestinal epithelial barrier integrity: secreted by myeloid cells and promotes intestinal epithelial cells proliferation and survival. Also mediates osteoclast-endothelial cell crosstalk in growing bone: produced by osteoclasts and protects the neighboring vascular cells against senescence by promoting rRNA transcription. The chain is Angiogenin (ANG) from Equus caballus (Horse).